The sequence spans 354 residues: tRNA N6-adenosine threonylcarbamoyltransferase (354 aa).

Fe cation is bound by residues H115 and H119. Residues 138-142 (LVSGG), D171, G184, and N285 contribute to the substrate site. Residue D313 coordinates Fe cation.

This sequence belongs to the KAE1 / TsaD family. It depends on Fe(2+) as a cofactor.

Its subcellular location is the cytoplasm. It carries out the reaction L-threonylcarbamoyladenylate + adenosine(37) in tRNA = N(6)-L-threonylcarbamoyladenosine(37) in tRNA + AMP + H(+). Its function is as follows. Required for the formation of a threonylcarbamoyl group on adenosine at position 37 (t(6)A37) in tRNAs that read codons beginning with adenine. Is involved in the transfer of the threonylcarbamoyl moiety of threonylcarbamoyl-AMP (TC-AMP) to the N6 group of A37, together with TsaE and TsaB. TsaD likely plays a direct catalytic role in this reaction. This is tRNA N6-adenosine threonylcarbamoyltransferase from Albidiferax ferrireducens (strain ATCC BAA-621 / DSM 15236 / T118) (Rhodoferax ferrireducens).